Here is a 186-residue protein sequence, read N- to C-terminus: Ribosome-recycling factor (186 aa).

Residues 140–163 (LKKAEKDGDIGQDEGRSLSERVQK) form a disordered region.

Belongs to the RRF family.

It is found in the cytoplasm. Functionally, responsible for the release of ribosomes from messenger RNA at the termination of protein biosynthesis. May increase the efficiency of translation by recycling ribosomes from one round of translation to another. The sequence is that of Ribosome-recycling factor from Rhizobium rhizogenes (strain K84 / ATCC BAA-868) (Agrobacterium radiobacter).